Consider the following 125-residue polypeptide: MLPEPHRLRRHSDFSMTVRRGRRMGRRDLVVHAFDRAQADELVSSGGPRFGLVVSKAVGPAVIRHRVARRLRHICIDLVDVVPRGTDVVIRALPGAATASSRDLEKQLRAGLLRLDLLAPVSTSA.

It belongs to the RnpA family. Consists of a catalytic RNA component (M1 or rnpB) and a protein subunit.

It carries out the reaction Endonucleolytic cleavage of RNA, removing 5'-extranucleotides from tRNA precursor.. Functionally, RNaseP catalyzes the removal of the 5'-leader sequence from pre-tRNA to produce the mature 5'-terminus. It can also cleave other RNA substrates such as 4.5S RNA. The protein component plays an auxiliary but essential role in vivo by binding to the 5'-leader sequence and broadening the substrate specificity of the ribozyme. This chain is Ribonuclease P protein component, found in Rhodococcus jostii (strain RHA1).